Here is a 191-residue protein sequence, read N- to C-terminus: Protein Ves (191 aa).

It belongs to the Ves family.

This Escherichia fergusonii (strain ATCC 35469 / DSM 13698 / CCUG 18766 / IAM 14443 / JCM 21226 / LMG 7866 / NBRC 102419 / NCTC 12128 / CDC 0568-73) protein is Protein Ves.